Here is a 353-residue protein sequence, read N- to C-terminus: Uroporphyrinogen decarboxylase (353 aa).

Residues 26–30, aspartate 76, tyrosine 153, threonine 208, and histidine 326 contribute to the substrate site; that span reads RQAGR.

The protein belongs to the uroporphyrinogen decarboxylase family. As to quaternary structure, homodimer.

It is found in the cytoplasm. It catalyses the reaction uroporphyrinogen III + 4 H(+) = coproporphyrinogen III + 4 CO2. The protein operates within porphyrin-containing compound metabolism; protoporphyrin-IX biosynthesis; coproporphyrinogen-III from 5-aminolevulinate: step 4/4. Functionally, catalyzes the decarboxylation of four acetate groups of uroporphyrinogen-III to yield coproporphyrinogen-III. The protein is Uroporphyrinogen decarboxylase of Chromohalobacter salexigens (strain ATCC BAA-138 / DSM 3043 / CIP 106854 / NCIMB 13768 / 1H11).